A 312-amino-acid chain; its full sequence is Ribosomal RNA small subunit methyltransferase H (312 aa).

S-adenosyl-L-methionine-binding positions include 36–38 (GGH), Asp-55, Phe-81, Asp-103, and Gln-110.

Belongs to the methyltransferase superfamily. RsmH family.

It localises to the cytoplasm. The catalysed reaction is cytidine(1402) in 16S rRNA + S-adenosyl-L-methionine = N(4)-methylcytidine(1402) in 16S rRNA + S-adenosyl-L-homocysteine + H(+). In terms of biological role, specifically methylates the N4 position of cytidine in position 1402 (C1402) of 16S rRNA. This chain is Ribosomal RNA small subunit methyltransferase H, found in Marinomonas sp. (strain MWYL1).